We begin with the raw amino-acid sequence, 901 residues long: Protein translocase subunit SecA (901 aa).

ATP is bound by residues glutamine 87, 105-109 (GEGKT), and aspartate 512. The segment at 859–901 (HQDDDSAAAAALAAQTGERKVGRNDPCPCGSGKKYKQCHGRLQ) is disordered. Residues cysteine 885, cysteine 887, cysteine 896, and histidine 897 each coordinate Zn(2+). The segment covering 891–901 (KKYKQCHGRLQ) has biased composition (basic residues).

This sequence belongs to the SecA family. Monomer and homodimer. Part of the essential Sec protein translocation apparatus which comprises SecA, SecYEG and auxiliary proteins SecDF-YajC and YidC. Requires Zn(2+) as cofactor.

Its subcellular location is the cell inner membrane. It localises to the cytoplasm. It carries out the reaction ATP + H2O + cellular proteinSide 1 = ADP + phosphate + cellular proteinSide 2.. Its function is as follows. Part of the Sec protein translocase complex. Interacts with the SecYEG preprotein conducting channel. Has a central role in coupling the hydrolysis of ATP to the transfer of proteins into and across the cell membrane, serving both as a receptor for the preprotein-SecB complex and as an ATP-driven molecular motor driving the stepwise translocation of polypeptide chains across the membrane. This is Protein translocase subunit SecA from Escherichia coli O157:H7.